Here is an 80-residue protein sequence, read N- to C-terminus: Cytochrome c-553 (80 aa).

Positions 13, 16, 17, and 58 each coordinate heme c.

In terms of processing, binds 1 heme c group covalently per subunit.

It is found in the periplasm. Functionally, natural electron acceptor for a formate dehydrogenase. This Desulfomicrobium norvegicum (strain DSM 1741 / NCIMB 8310) (Desulfovibrio baculatus (strain Norway 4)) protein is Cytochrome c-553.